We begin with the raw amino-acid sequence, 162 residues long: Peptidyl-prolyl cis-trans isomerase-like 1 (162 aa).

The region spanning 1 to 155 (MATDVAFDTS…DGVKILRARI (155 aa)) is the PPIase cyclophilin-type domain.

Belongs to the cyclophilin-type PPIase family. PPIL1 subfamily.

It catalyses the reaction [protein]-peptidylproline (omega=180) = [protein]-peptidylproline (omega=0). Its function is as follows. PPIases accelerate the folding of proteins. It catalyzes the cis-trans isomerization of proline imidic peptide bonds in oligopeptides. The protein is Peptidyl-prolyl cis-trans isomerase-like 1 (cypC) of Aspergillus niger.